The following is a 275-amino-acid chain: NH(3)-dependent NAD(+) synthetase (275 aa).

An ATP-binding site is contributed by 50–57; the sequence is GISGGVDS. D56 provides a ligand contact to Mg(2+). A deamido-NAD(+)-binding site is contributed by R147. Position 167 (T167) interacts with ATP. Position 172 (E172) interacts with Mg(2+). Deamido-NAD(+) is bound by residues K180 and D187. The ATP site is built by K196 and T218. 267–268 serves as a coordination point for deamido-NAD(+); it reads HK.

The protein belongs to the NAD synthetase family. In terms of assembly, homodimer.

The catalysed reaction is deamido-NAD(+) + NH4(+) + ATP = AMP + diphosphate + NAD(+) + H(+). It functions in the pathway cofactor biosynthesis; NAD(+) biosynthesis; NAD(+) from deamido-NAD(+) (ammonia route): step 1/1. Catalyzes the ATP-dependent amidation of deamido-NAD to form NAD. Uses ammonia as a nitrogen source. This chain is NH(3)-dependent NAD(+) synthetase, found in Pseudomonas fluorescens (strain Pf0-1).